Reading from the N-terminus, the 48-residue chain is Large ribosomal subunit protein bL36c (48 aa).

The protein belongs to the bacterial ribosomal protein bL36 family.

It localises to the plastid. It is found in the chloroplast. The sequence is that of Large ribosomal subunit protein bL36c (rpl36) from Guillardia theta (Cryptophyte).